The following is a 465-amino-acid chain: Siroheme synthase (465 aa).

Residues 1–203 (MDFLPLFHSL…GRPAEAERLL (203 aa)) are precorrin-2 dehydrogenase /sirohydrochlorin ferrochelatase. NAD(+)-binding positions include 22 to 23 (EV) and 43 to 44 (PQ). Residue Ser-128 is modified to Phosphoserine. Residues 217–465 (GEVYLVGAGP…AWFEGAREDA (249 aa)) are uroporphyrinogen-III C-methyltransferase. Pro-226 contributes to the S-adenosyl-L-methionine binding site. Asp-249 (proton acceptor) is an active-site residue. The active-site Proton donor is Lys-271. Residues 302–304 (GGD), Ile-307, 332–333 (TA), Met-384, and Gly-413 each bind S-adenosyl-L-methionine.

This sequence in the N-terminal section; belongs to the precorrin-2 dehydrogenase / sirohydrochlorin ferrochelatase family. In the C-terminal section; belongs to the precorrin methyltransferase family.

The enzyme catalyses uroporphyrinogen III + 2 S-adenosyl-L-methionine = precorrin-2 + 2 S-adenosyl-L-homocysteine + H(+). The catalysed reaction is precorrin-2 + NAD(+) = sirohydrochlorin + NADH + 2 H(+). It carries out the reaction siroheme + 2 H(+) = sirohydrochlorin + Fe(2+). It functions in the pathway cofactor biosynthesis; adenosylcobalamin biosynthesis; precorrin-2 from uroporphyrinogen III: step 1/1. Its pathway is cofactor biosynthesis; adenosylcobalamin biosynthesis; sirohydrochlorin from precorrin-2: step 1/1. It participates in porphyrin-containing compound metabolism; siroheme biosynthesis; precorrin-2 from uroporphyrinogen III: step 1/1. The protein operates within porphyrin-containing compound metabolism; siroheme biosynthesis; siroheme from sirohydrochlorin: step 1/1. It functions in the pathway porphyrin-containing compound metabolism; siroheme biosynthesis; sirohydrochlorin from precorrin-2: step 1/1. Functionally, multifunctional enzyme that catalyzes the SAM-dependent methylations of uroporphyrinogen III at position C-2 and C-7 to form precorrin-2 via precorrin-1. Then it catalyzes the NAD-dependent ring dehydrogenation of precorrin-2 to yield sirohydrochlorin. Finally, it catalyzes the ferrochelation of sirohydrochlorin to yield siroheme. The polypeptide is Siroheme synthase (Pseudomonas aeruginosa (strain LESB58)).